Reading from the N-terminus, the 858-residue chain is GDP-fucose protein O-fucosyltransferase 2 (858 aa).

The Cytoplasmic portion of the chain corresponds to 1 to 150 (MHCQLGGQAR…RPPCLLNHRR (150 aa)). Residues 151–171 (LLLGLVSVLTVFLSCLPFTNA) traverse the membrane as a helical; Signal-anchor for type II membrane protein segment. At 172 to 858 (TVSPAALQDV…WPSLDPSSTL (687 aa)) the chain is on the lumenal side. 237-241 (GEGFH) is a binding site for GDP-beta-L-fucose. E238 functions as the Proton acceptor in the catalytic mechanism. Residues 448-510 (AALTPQERQR…SRSRKEIQEE (63 aa)) are disordered. The segment covering 486–510 (DGEREKRKPGRRSDTSRSRKEIQEE) has biased composition (basic and acidic residues). Residues 646-648 (HLR) and 787-788 (RF) contribute to the GDP-beta-L-fucose site. The interval 819–858 (TGGQAQGKCFATKSHDPPEGRSRSELRRKYWPSLDPSSTL) is disordered. The segment covering 831 to 846 (KSHDPPEGRSRSELRR) has biased composition (basic and acidic residues).

This sequence belongs to the glycosyltransferase 68 family.

It is found in the endoplasmic reticulum membrane. It catalyses the reaction L-seryl-[protein] + GDP-beta-L-fucose = 3-O-(alpha-L-fucosyl)-L-seryl-[protein] + GDP + H(+). The catalysed reaction is L-threonyl-[protein] + GDP-beta-L-fucose = 3-O-(alpha-L-fucosyl)-L-threonyl-[protein] + GDP + H(+). It participates in protein modification; protein glycosylation. Functionally, catalyzes the reaction that attaches fucose through an O-glycosidic linkage to a conserved serine or threonine residue in the consensus sequence C1-X-X-S/T-C2 of thrombospondin type I repeats (TSRs) where C1 and C2 are the first and second cysteines of the repeat, respectively. O-fucosylates microneme protein MIC2 and may play a role in its stabilization. Probably by regulating protein O-fucosylation, may play a role in tachyzoite adhesion to and/or invasion of host cells; however, POFUT2 involvement in adhesion/invasion is controversial. The sequence is that of GDP-fucose protein O-fucosyltransferase 2 from Toxoplasma gondii (strain ATCC 50853 / GT1).